The chain runs to 225 residues: tRNA (guanine-N(7)-)-methyltransferase (225 aa).

S-adenosyl-L-methionine is bound by residues glutamate 56, glutamate 81, aspartate 108, and aspartate 131. Aspartate 131 is an active-site residue. Residues lysine 135, aspartate 167, and 204–207 each bind substrate; that span reads TKFE.

It belongs to the class I-like SAM-binding methyltransferase superfamily. TrmB family.

It carries out the reaction guanosine(46) in tRNA + S-adenosyl-L-methionine = N(7)-methylguanosine(46) in tRNA + S-adenosyl-L-homocysteine. It functions in the pathway tRNA modification; N(7)-methylguanine-tRNA biosynthesis. Functionally, catalyzes the formation of N(7)-methylguanine at position 46 (m7G46) in tRNA. The polypeptide is tRNA (guanine-N(7)-)-methyltransferase (Legionella pneumophila (strain Lens)).